A 359-amino-acid polypeptide reads, in one-letter code: Holliday junction branch migration complex subunit RuvB (359 aa).

A large ATPase domain (RuvB-L) region spans residues Met1–Tyr187. ATP is bound by residues Leu26, Arg27, Gly68, Lys71, Thr72, Thr73, Glu134 to Tyr136, Arg177, Tyr187, and Arg224. A Mg(2+)-binding site is contributed by Thr72. A small ATPAse domain (RuvB-S) region spans residues Glu188 to Asp257. A head domain (RuvB-H) region spans residues Pro260–Leu359. Residues Arg315 and Arg320 each contribute to the DNA site.

The protein belongs to the RuvB family. Homohexamer. Forms an RuvA(8)-RuvB(12)-Holliday junction (HJ) complex. HJ DNA is sandwiched between 2 RuvA tetramers; dsDNA enters through RuvA and exits via RuvB. An RuvB hexamer assembles on each DNA strand where it exits the tetramer. Each RuvB hexamer is contacted by two RuvA subunits (via domain III) on 2 adjacent RuvB subunits; this complex drives branch migration. In the full resolvosome a probable DNA-RuvA(4)-RuvB(12)-RuvC(2) complex forms which resolves the HJ.

It localises to the cytoplasm. The catalysed reaction is ATP + H2O = ADP + phosphate + H(+). In terms of biological role, the RuvA-RuvB-RuvC complex processes Holliday junction (HJ) DNA during genetic recombination and DNA repair, while the RuvA-RuvB complex plays an important role in the rescue of blocked DNA replication forks via replication fork reversal (RFR). RuvA specifically binds to HJ cruciform DNA, conferring on it an open structure. The RuvB hexamer acts as an ATP-dependent pump, pulling dsDNA into and through the RuvAB complex. RuvB forms 2 homohexamers on either side of HJ DNA bound by 1 or 2 RuvA tetramers; 4 subunits per hexamer contact DNA at a time. Coordinated motions by a converter formed by DNA-disengaged RuvB subunits stimulates ATP hydrolysis and nucleotide exchange. Immobilization of the converter enables RuvB to convert the ATP-contained energy into a lever motion, pulling 2 nucleotides of DNA out of the RuvA tetramer per ATP hydrolyzed, thus driving DNA branch migration. The RuvB motors rotate together with the DNA substrate, which together with the progressing nucleotide cycle form the mechanistic basis for DNA recombination by continuous HJ branch migration. Branch migration allows RuvC to scan DNA until it finds its consensus sequence, where it cleaves and resolves cruciform DNA. The chain is Holliday junction branch migration complex subunit RuvB from Clavibacter michiganensis subsp. michiganensis (strain NCPPB 382).